Reading from the N-terminus, the 75-residue chain is Antimicrobial peptide Meucin-49-1 (75 aa).

An N-terminal signal peptide occupies residues 1–22 (MNKKILLVIFIVTMLIVDEVNS).

Belongs to the non-disulfide-bridged peptide (NDBP) superfamily. Long chain multifunctional peptide (group 2) family. In terms of tissue distribution, expressed by the venom gland.

The protein resides in the secreted. Its function is as follows. Antimicrobial peptide. In Mesobuthus eupeus (Lesser Asian scorpion), this protein is Antimicrobial peptide Meucin-49-1.